A 313-amino-acid chain; its full sequence is D-alanine--D-alanine ligase (313 aa).

The 201-residue stretch at Lys-108–Ala-308 folds into the ATP-grasp domain. Val-138 to Tyr-193 contacts ATP. Mg(2+) is bound by residues Asp-262, Glu-275, and Asn-277.

The protein belongs to the D-alanine--D-alanine ligase family. Requires Mg(2+) as cofactor. It depends on Mn(2+) as a cofactor.

The protein localises to the cytoplasm. It carries out the reaction 2 D-alanine + ATP = D-alanyl-D-alanine + ADP + phosphate + H(+). It functions in the pathway cell wall biogenesis; peptidoglycan biosynthesis. Functionally, cell wall formation. The polypeptide is D-alanine--D-alanine ligase (Burkholderia ambifaria (strain ATCC BAA-244 / DSM 16087 / CCUG 44356 / LMG 19182 / AMMD) (Burkholderia cepacia (strain AMMD))).